The sequence spans 151 residues: Deoxyuridine 5'-triphosphate nucleotidohydrolase (151 aa).

Substrate-binding positions include 70–72 (RSG), Asn-83, 87–89 (LID), and Met-97.

This sequence belongs to the dUTPase family. Requires Mg(2+) as cofactor.

It catalyses the reaction dUTP + H2O = dUMP + diphosphate + H(+). The protein operates within pyrimidine metabolism; dUMP biosynthesis; dUMP from dCTP (dUTP route): step 2/2. Functionally, this enzyme is involved in nucleotide metabolism: it produces dUMP, the immediate precursor of thymidine nucleotides and it decreases the intracellular concentration of dUTP so that uracil cannot be incorporated into DNA. The protein is Deoxyuridine 5'-triphosphate nucleotidohydrolase of Stutzerimonas stutzeri (strain A1501) (Pseudomonas stutzeri).